A 485-amino-acid chain; its full sequence is Ribulose bisphosphate carboxylase large chain 2 (485 aa).

2 residues coordinate substrate: Asn-125 and Thr-175. Lys-177 acts as the Proton acceptor in catalysis. Residue Lys-179 coordinates substrate. 3 residues coordinate Mg(2+): Lys-203, Asp-205, and Glu-206. Lys-203 is subject to N6-carboxylysine. His-295 functions as the Proton acceptor in the catalytic mechanism. Substrate-binding residues include Arg-296, His-328, and Ser-380.

This sequence belongs to the RuBisCO large chain family. Type I subfamily. As to quaternary structure, heterohexadecamer of 8 large chains and 8 small chains. Mg(2+) is required as a cofactor.

The catalysed reaction is 2 (2R)-3-phosphoglycerate + 2 H(+) = D-ribulose 1,5-bisphosphate + CO2 + H2O. The enzyme catalyses D-ribulose 1,5-bisphosphate + O2 = 2-phosphoglycolate + (2R)-3-phosphoglycerate + 2 H(+). RuBisCO catalyzes two reactions: the carboxylation of D-ribulose 1,5-bisphosphate, the primary event in carbon dioxide fixation, as well as the oxidative fragmentation of the pentose substrate. Both reactions occur simultaneously and in competition at the same active site. This Methylibium petroleiphilum (strain ATCC BAA-1232 / LMG 22953 / PM1) protein is Ribulose bisphosphate carboxylase large chain 2.